Reading from the N-terminus, the 587-residue chain is Kelch-like protein 3 (587 aa).

A Phosphoserine modification is found at S10. Positions 50 to 117 constitute a BTB domain; that stretch reads CDVMIVAEDV…VYTAEIEVTE (68 aa). Positions 152-254 constitute a BACK domain; sequence CLGIRAFADV…PRDYLVQTVE (103 aa). T295 bears the Phosphothreonine mark. Kelch repeat units follow at residues 302–347, 348–394, 396–441, 442–490, 491–537, and 539–585; these read VMIV…FMAG, HVYA…VLND, LYAV…VVEG, KLYA…VLSG, QLYA…AVNG, and LYVV…VIHK. T375 carries the phosphothreonine modification. A phosphoserine mark is found at S376 and S433.

This sequence belongs to the KLHL3 family. Homodimer. Component of the BCR(KLHL3) E3 ubiquitin ligase complex, at least composed of CUL3 and KLHL3 and RBX1. Interacts with CLDN8. Phosphorylation at Ser-433 by PKA or PKC decreases the interaction with WNK1 and WNK4, leading to inhibit their degradation by the BCR(KLHL3) complex. Phosphorylated at Ser-433 by PKC in response to angiotensin II signaling, decreasing ability to promote degradation of WNK1 and WNK4, leading to activation of Na-Cl cotransporter SLC12A3/NCC. Phosphorylation at Ser-433 is increased by insulin. Dephosphorylated at Ser-433 by calcineurin PPP3CA, promoting degradation of WNK1 and WNK4.

It is found in the cytoplasm. It localises to the cytoskeleton. The protein resides in the cytosol. The protein operates within protein modification; protein ubiquitination. Functionally, substrate-specific adapter of a BCR (BTB-CUL3-RBX1) E3 ubiquitin ligase complex that acts as a regulator of ion transport in the distal nephron. The BCR(KLHL3) complex acts by mediating ubiquitination and degradation of WNK1 and WNK4, two activators of Na-Cl cotransporter SLC12A3/NCC in distal convoluted tubule cells of kidney, thereby regulating NaCl reabsorption. The BCR(KLHL3) complex also mediates ubiquitination and degradation of WNK3. The BCR(KLHL3) complex also mediates ubiquitination of CLDN8, a tight-junction protein required for paracellular chloride transport in the kidney, leading to its degradation. This is Kelch-like protein 3 (KLHL3) from Pongo abelii (Sumatran orangutan).